Reading from the N-terminus, the 329-residue chain is Ribosomal RNA small subunit methyltransferase H (329 aa).

S-adenosyl-L-methionine contacts are provided by residues 34-36 (GGH), Asp59, Phe86, Asp112, and Gln119.

This sequence belongs to the methyltransferase superfamily. RsmH family.

The protein localises to the cytoplasm. The enzyme catalyses cytidine(1402) in 16S rRNA + S-adenosyl-L-methionine = N(4)-methylcytidine(1402) in 16S rRNA + S-adenosyl-L-homocysteine + H(+). Functionally, specifically methylates the N4 position of cytidine in position 1402 (C1402) of 16S rRNA. In Chlorobium phaeobacteroides (strain DSM 266 / SMG 266 / 2430), this protein is Ribosomal RNA small subunit methyltransferase H.